Reading from the N-terminus, the 324-residue chain is NAD(P)H-dependent D-xylose reductase xyl1 (324 aa).

Catalysis depends on Tyr50, which acts as the Proton donor. A substrate-binding site is contributed by His112. Residues 168 to 169 (SN), 217 to 226 (SSFGPTGFME), and 273 to 283 (KTSRPEVMAQN) contribute to the NAD(+) site.

The protein belongs to the aldo/keto reductase family.

It carries out the reaction an alditol + NAD(+) = an aldose + NADH + H(+). The enzyme catalyses an alditol + NADP(+) = an aldose + NADPH + H(+). It catalyses the reaction xylitol + NAD(+) = D-xylose + NADH + H(+). The catalysed reaction is xylitol + NADP(+) = D-xylose + NADPH + H(+). It participates in carbohydrate metabolism; D-xylose degradation. It functions in the pathway carbohydrate degradation; L-arabinose degradation via L-arabinitol; D-xylulose 5-phosphate from L-arabinose (fungal route): step 1/5. Catalyzes the initial reaction in the xylose utilization pathway by reducing D-xylose into xylitol. Xylose is a major component of hemicelluloses such as xylan. Most fungi utilize D-xylose via three enzymatic reactions, xylose reductase (XR), xylitol dehydrogenase (XDH), and xylulokinase, to form xylulose 5-phosphate, which enters pentose phosphate pathway. Also major aldose reductase in pentose and D-galactose catabolism. Reduces the pentose L-arabinose and the hexose D-galactose to their respective polyols. Responsible for extracellular beta-galactosidase formation and cellulase induction during growth on lactose. This Hypocrea jecorina (Trichoderma reesei) protein is NAD(P)H-dependent D-xylose reductase xyl1 (xyl1).